Consider the following 357-residue polypeptide: tRNA/tmRNA (uracil-C(5))-methyltransferase (357 aa).

S-adenosyl-L-methionine is bound by residues Gln-185, Tyr-212, Asn-217, Glu-233, and Asp-291. Cys-316 serves as the catalytic Nucleophile. The active-site Proton acceptor is the Glu-350.

The protein belongs to the class I-like SAM-binding methyltransferase superfamily. RNA M5U methyltransferase family. TrmA subfamily.

It catalyses the reaction uridine(54) in tRNA + S-adenosyl-L-methionine = 5-methyluridine(54) in tRNA + S-adenosyl-L-homocysteine + H(+). The catalysed reaction is uridine(341) in tmRNA + S-adenosyl-L-methionine = 5-methyluridine(341) in tmRNA + S-adenosyl-L-homocysteine + H(+). Functionally, dual-specificity methyltransferase that catalyzes the formation of 5-methyluridine at position 54 (m5U54) in all tRNAs, and that of position 341 (m5U341) in tmRNA (transfer-mRNA). In Campylobacter hominis (strain ATCC BAA-381 / DSM 21671 / CCUG 45161 / LMG 19568 / NCTC 13146 / CH001A), this protein is tRNA/tmRNA (uracil-C(5))-methyltransferase.